The sequence spans 217 residues: Ribonuclease HII (217 aa).

Residues 34–217 (WPVAGTDEAG…RMSFRPLKRD (184 aa)) enclose the RNase H type-2 domain. Asp40, Glu41, and Asp131 together coordinate a divalent metal cation.

It belongs to the RNase HII family. Requires Mn(2+) as cofactor. Mg(2+) serves as cofactor.

The protein localises to the cytoplasm. The catalysed reaction is Endonucleolytic cleavage to 5'-phosphomonoester.. In terms of biological role, endonuclease that specifically degrades the RNA of RNA-DNA hybrids. This is Ribonuclease HII from Agrobacterium fabrum (strain C58 / ATCC 33970) (Agrobacterium tumefaciens (strain C58)).